The chain runs to 76 residues: Tautomerase PptA (76 aa).

Catalysis depends on proline 2, which acts as the Proton acceptor; via imino nitrogen.

Belongs to the 4-oxalocrotonate tautomerase family. PptA subfamily. In terms of assembly, homodimer.

It localises to the cytoplasm. The sequence is that of Tautomerase PptA from Enterobacter sp. (strain 638).